A 237-amino-acid chain; its full sequence is Protein GrpE (237 aa).

A disordered region spans residues Met1–Thr65. Residues Val55–Thr65 are compositionally biased toward basic and acidic residues.

This sequence belongs to the GrpE family. Homodimer.

The protein localises to the cytoplasm. In terms of biological role, participates actively in the response to hyperosmotic and heat shock by preventing the aggregation of stress-denatured proteins, in association with DnaK and GrpE. It is the nucleotide exchange factor for DnaK and may function as a thermosensor. Unfolded proteins bind initially to DnaJ; upon interaction with the DnaJ-bound protein, DnaK hydrolyzes its bound ATP, resulting in the formation of a stable complex. GrpE releases ADP from DnaK; ATP binding to DnaK triggers the release of the substrate protein, thus completing the reaction cycle. Several rounds of ATP-dependent interactions between DnaJ, DnaK and GrpE are required for fully efficient folding. This is Protein GrpE from Corynebacterium efficiens (strain DSM 44549 / YS-314 / AJ 12310 / JCM 11189 / NBRC 100395).